We begin with the raw amino-acid sequence, 810 residues long: DNA ligase (810 aa).

NAD(+)-binding positions include 46–50 (DAEYD), 95–96 (SL), and Glu129. The active-site N6-AMP-lysine intermediate is the Lys131. NAD(+) contacts are provided by Arg152, Glu189, Lys305, and Lys329. Positions 434, 437, 458, and 464 each coordinate Zn(2+). The interval 528 to 548 (ERRAESGTAEPPKKAAKKKGD) is disordered. Residues 731-810 (AAASTFAGKT…DDWLAMVAQG (80 aa)) form the BRCT domain.

The protein belongs to the NAD-dependent DNA ligase family. LigA subfamily. The cofactor is Mg(2+). Requires Mn(2+) as cofactor.

It carries out the reaction NAD(+) + (deoxyribonucleotide)n-3'-hydroxyl + 5'-phospho-(deoxyribonucleotide)m = (deoxyribonucleotide)n+m + AMP + beta-nicotinamide D-nucleotide.. Its function is as follows. DNA ligase that catalyzes the formation of phosphodiester linkages between 5'-phosphoryl and 3'-hydroxyl groups in double-stranded DNA using NAD as a coenzyme and as the energy source for the reaction. It is essential for DNA replication and repair of damaged DNA. The polypeptide is DNA ligase (Methylobacterium radiotolerans (strain ATCC 27329 / DSM 1819 / JCM 2831 / NBRC 15690 / NCIMB 10815 / 0-1)).